The chain runs to 400 residues: MTALKVGSESWWQSKHGPEWQRLNDEMFEVTFWWRDPQGSEEYSTIKRVWVYITGVTDHHQNSQPRSMQRIAGTDVWQWTTQLNANWRGSYCFIPTERDDIFSAPSPDRLELREGWRKLLPQAIADPLNPQSWKGGRGHAVSALEMPQAPLQPGWDCPQAPETPAKEIIWKSERLKNSRRVWIFTTGDATAEERPLAVLLDGEFWAQSMPVWPALTSLTHRRQLPPAVYVLIDAIDTTHRAHELPCNADFWLAVQQELLPQVKAIAPFSDRADRTVVAGQSFGGLSALYAGLHWPERFGCVLSQSGSYWWPHRGGHQEGMLLEQLNTGEVSAEGLRIVLEAGVREPMIMQANQALYAQLHPLKESIFWRQVDGGHDALCWRGGLMQGLIDLWQPLFHDRS.

This sequence belongs to the Fes family.

The protein localises to the cytoplasm. It catalyses the reaction Fe(III)-enterobactin + 3 H2O + H(+) = Fe(III)-[N-(2,3-dihydroxybenzoyl)-L-serine] + 2 N-(2,3-dihydroxybenzoyl)-L-serine. The enzyme catalyses Fe(III)-enterobactin + H2O = Fe(III)-[N-(2,3-dihydroxybenzoyl)-L-serine]3 + H(+). The catalysed reaction is Fe(III)-[N-(2,3-dihydroxybenzoyl)-L-serine]3 + H2O + H(+) = Fe(III)-[N-(2,3-dihydroxybenzoyl)-L-serine]2 + N-(2,3-dihydroxybenzoyl)-L-serine. It carries out the reaction Fe(III)-[N-(2,3-dihydroxybenzoyl)-L-serine]2 + H2O + H(+) = Fe(III)-[N-(2,3-dihydroxybenzoyl)-L-serine] + N-(2,3-dihydroxybenzoyl)-L-serine. It catalyses the reaction enterobactin + 3 H2O = 3 N-(2,3-dihydroxybenzoyl)-L-serine + 2 H(+). Catalyzes the hydrolysis of ferric enterobactin (Fe-Ent). Is responsible for the release of iron from ferric enterobactin. Also catalyzes the hydrolysis of iron-free enterobactin (Ent). Hydrolyzes ferric monoglucosyl-C-Ent (Fe-MGE) poorly and does not hydrolyze ferric diglucosyl-C-Ent (Fe-DGE) or ferric triglucosyl-C-Ent (Fe-TGE) at all. Also hydrolyzes apo MGE, but catalyzes the hydrolysis of apo DGE very poorly, and does not process apo TGE at all. The catalytic efficiency for processing Fe-Ent is much higher than that for apo Ent, suggesting that Fe-Ent is the physiological substrate. This is Iron(III) enterobactin esterase from Escherichia coli O6:H1 (strain CFT073 / ATCC 700928 / UPEC).